Reading from the N-terminus, the 225-residue chain is 7-cyano-7-deazaguanine synthase (225 aa).

Position 10 to 20 (10 to 20 (VSGGLDSTTAL)) interacts with ATP. 4 residues coordinate Zn(2+): C189, C199, C202, and C205.

The protein belongs to the QueC family. Zn(2+) serves as cofactor.

It catalyses the reaction 7-carboxy-7-deazaguanine + NH4(+) + ATP = 7-cyano-7-deazaguanine + ADP + phosphate + H2O + H(+). It functions in the pathway purine metabolism; 7-cyano-7-deazaguanine biosynthesis. Catalyzes the ATP-dependent conversion of 7-carboxy-7-deazaguanine (CDG) to 7-cyano-7-deazaguanine (preQ(0)). This Saccharophagus degradans (strain 2-40 / ATCC 43961 / DSM 17024) protein is 7-cyano-7-deazaguanine synthase.